Consider the following 199-residue polypeptide: Chaperone protein TorD (199 aa).

Belongs to the TorD/DmsD family. TorD subfamily.

It is found in the cytoplasm. Functionally, involved in the biogenesis of TorA. Acts on TorA before the insertion of the molybdenum cofactor and, as a result, probably favors a conformation of the apoenzyme that is competent for acquiring the cofactor. This is Chaperone protein TorD from Actinobacillus pleuropneumoniae serotype 3 (strain JL03).